A 530-amino-acid polypeptide reads, in one-letter code: Arginine--tRNA ligase (530 aa).

The 'HIGH' region motif lies at 113-123 (ANPTGPLHIGH).

This sequence belongs to the class-I aminoacyl-tRNA synthetase family. Monomer.

The protein resides in the cytoplasm. The enzyme catalyses tRNA(Arg) + L-arginine + ATP = L-arginyl-tRNA(Arg) + AMP + diphosphate. The chain is Arginine--tRNA ligase from Campylobacter jejuni (strain RM1221).